Consider the following 638-residue polypeptide: 1,4-alpha-glucan branching enzyme GlgB (638 aa).

D320 (nucleophile) is an active-site residue. E373 functions as the Proton donor in the catalytic mechanism.

It belongs to the glycosyl hydrolase 13 family. GlgB subfamily. In terms of assembly, monomer.

It carries out the reaction Transfers a segment of a (1-&gt;4)-alpha-D-glucan chain to a primary hydroxy group in a similar glucan chain.. Its pathway is glycan biosynthesis; glycogen biosynthesis. Catalyzes the formation of the alpha-1,6-glucosidic linkages in glycogen by scission of a 1,4-alpha-linked oligosaccharide from growing alpha-1,4-glucan chains and the subsequent attachment of the oligosaccharide to the alpha-1,6 position. In Oleidesulfovibrio alaskensis (strain ATCC BAA-1058 / DSM 17464 / G20) (Desulfovibrio alaskensis), this protein is 1,4-alpha-glucan branching enzyme GlgB.